The chain runs to 286 residues: Bifunctional protein FolD (286 aa).

Residues 160–162, Ser-189, and Thr-230 contribute to the NADP(+) site; that span reads GRS.

It belongs to the tetrahydrofolate dehydrogenase/cyclohydrolase family. As to quaternary structure, homodimer.

The catalysed reaction is (6R)-5,10-methylene-5,6,7,8-tetrahydrofolate + NADP(+) = (6R)-5,10-methenyltetrahydrofolate + NADPH. It catalyses the reaction (6R)-5,10-methenyltetrahydrofolate + H2O = (6R)-10-formyltetrahydrofolate + H(+). It functions in the pathway one-carbon metabolism; tetrahydrofolate interconversion. Functionally, catalyzes the oxidation of 5,10-methylenetetrahydrofolate to 5,10-methenyltetrahydrofolate and then the hydrolysis of 5,10-methenyltetrahydrofolate to 10-formyltetrahydrofolate. This chain is Bifunctional protein FolD, found in Chlamydia pneumoniae (Chlamydophila pneumoniae).